A 254-amino-acid polypeptide reads, in one-letter code: Protein odd-skipped-related 2 (254 aa).

3 consecutive C2H2-type zinc fingers follow at residues Phe124–His146, Tyr152–His174, and Phe180–His202.

This sequence belongs to the Odd C2H2-type zinc-finger protein family.

It is found in the nucleus. Functionally, may function as transcription regulator. Required for morphogenesis and function of the digestive tract. The protein is Protein odd-skipped-related 2 of Caenorhabditis elegans.